Consider the following 92-residue polypeptide: Long neurotoxin 1 (92 aa).

The first 21 residues, 1–21 (MKTLLLTLVVVTIVCLDLGYT), serve as a signal peptide directing secretion. Cystine bridges form between C24-C42, C35-C63, C48-C52, C67-C79, and C80-C85.

Belongs to the three-finger toxin family. Long-chain subfamily. Type II alpha-neurotoxin sub-subfamily. Expressed by the venom gland.

The protein localises to the secreted. Binds with high affinity to muscular (alpha-1/CHRNA1) and neuronal (alpha-7/CHRNA7) nicotinic acetylcholine receptor (nAChR) and inhibits acetylcholine from binding to the receptor, thereby impairing neuromuscular and neuronal transmission. This is Long neurotoxin 1 from Oxyuranus microlepidotus (Inland taipan).